The primary structure comprises 511 residues: Glycoprotein (511 aa).

The first 16 residues, 1–16 (MKCLLYLAFLFIGVNC), serve as a signal peptide directing secretion. Over 17–467 (KFTIVFPHNQ…FSSWKSSIAS (451 aa)) the chain is Virion surface. The segment at 18-35 (FTIVFPHNQKGNWKNVPS) is trimerization. 6 disulfides stabilise this stretch: Cys40/Cys300, Cys75/Cys108, Cys84/Cys130, Cys169/Cys174, Cys193/Cys240, and Cys235/Cys269. The segment at 53–172 (IGTAIQVKMP…QFINGKCSNY (120 aa)) is fusion peptide. Asn179 carries N-linked (GlcNAc...) asparagine; by host glycosylation. A trimerization region spans residues 259–309 (DLFAAARFPECPEGSSISAPSQTSVDVSLIQDVERILDYSLCQETWSKIRA). The N-linked (GlcNAc...) asparagine; by host glycan is linked to Asn336. The trimerization stretch occupies residues 383–405 (EIGPNGVLRTSSGYKFPLYMIGH). A helical membrane pass occupies residues 468–488 (FFFIIGLIIGLFLVLRVGIHL). The S-palmitoyl cysteine; by host moiety is linked to residue Cys489. Over 489-511 (CIKLKHTKKRQIYTDIEMNRLGK) the chain is Intravirion. A basolateral targeting ex vivo motif is present at residues 496–506 (KKRQIYTDIEM).

Belongs to the vesiculovirus glycoprotein family. In terms of assembly, homotrimer. Interacts with host LDL at target cell surface. Post-translationally, glycosylated by host. Palmitoylated by host.

Its subcellular location is the virion membrane. The protein localises to the host membrane. Its function is as follows. Attaches the virus to host LDL receptors, inducing clathrin-dependent endocytosis of the virion. In the endosome, the acidic pH induces conformational changes in the glycoprotein trimer, which trigger fusion between virus and endosomal membrane. This is Glycoprotein (G) from Aedes (Bovine).